The following is a 564-amino-acid chain: Potassium-transporting ATPase potassium-binding subunit (564 aa).

10 helical membrane-spanning segments follow: residues 4–24 (YDFALLLAFFVIVLLPAPWLG), 67–87 (TLALLAFNLVGFLLLFAVLLL), 135–155 (LGLTVQNFVSPATGLAVLVVL), 179–199 (LYGLLPLCLLLALLLVWQGVP), 258–278 (FEVASIILIPVALVFTFGHYV), 286–306 (AILACMLALFLIGGSTALWSE), 382–402 (AGLYGMLLFVLIAVFLAGLMI), 420–440 (LLVATLLVMPVGVLVLGAIAA), 487–507 (LMIGLAMLIGRFGYILPILAL), and 533–553 (GLLLVTILLVGGLTFLPTLAL).

This sequence belongs to the KdpA family. The system is composed of three essential subunits: KdpA, KdpB and KdpC.

Its subcellular location is the cell inner membrane. In terms of biological role, part of the high-affinity ATP-driven potassium transport (or Kdp) system, which catalyzes the hydrolysis of ATP coupled with the electrogenic transport of potassium into the cytoplasm. This subunit binds the periplasmic potassium ions and delivers the ions to the membrane domain of KdpB through an intramembrane tunnel. This is Potassium-transporting ATPase potassium-binding subunit from Pseudomonas putida (strain ATCC 47054 / DSM 6125 / CFBP 8728 / NCIMB 11950 / KT2440).